The following is a 311-amino-acid chain: Olfactory receptor 5P3 (311 aa).

Over 1-25 (MGTGNDTTVVEFTLLGLSEDTTVCA) the chain is Extracellular. N-linked (GlcNAc...) asparagine glycosylation occurs at Asn-5. The chain crosses the membrane as a helical span at residues 26–46 (ILFLVFLGIYVVTLMGNISII). Topologically, residues 47–54 (VLIRRSHH) are cytoplasmic. The chain crosses the membrane as a helical span at residues 55–75 (LHTPMYIFLCHLAFVDIGYSS). The Extracellular portion of the chain corresponds to 76 to 99 (SVTPVMLMSFLRKETSLPVAGCVA). A disulfide bridge links Cys-97 with Cys-189. Residues 100-120 (QLCSVVTFGTAECFLLAAMAY) traverse the membrane as a helical segment. Over 121-139 (DRYVAICSPLLYSTCMSPG) the chain is Cytoplasmic. The helical transmembrane segment at 140 to 160 (VCIILVGMSYLGGCVNAWTFI) threads the bilayer. Residues 161-196 (GCLLRLSFCGPNKVNHFFCDYSPLLKLACSHDFTFE) are Extracellular-facing. Residues 197 to 217 (IIPAISSGSIIVATVCVIAIS) traverse the membrane as a helical segment. Residues 218 to 237 (YIYILITILKMHSTKGRHKA) lie on the Cytoplasmic side of the membrane. Residues 238-258 (FSTCTSHLTAVTLFYGTITFI) traverse the membrane as a helical segment. Topologically, residues 259–271 (YVMPKSSYSTDQN) are extracellular. The chain crosses the membrane as a helical span at residues 272 to 292 (KVVSVFYTVVIPMLNPLIYSL). At 293 to 311 (RNKEIKGALKRELRIKIFS) the chain is on the cytoplasmic side.

The protein belongs to the G-protein coupled receptor 1 family. Expressed in the tongue.

The protein resides in the cell membrane. In terms of biological role, odorant receptor (Potential). May be involved in taste perception. This chain is Olfactory receptor 5P3 (OR5P3), found in Homo sapiens (Human).